We begin with the raw amino-acid sequence, 156 residues long: Endoribonuclease YbeY (156 aa).

Positions 115, 119, and 125 each coordinate Zn(2+).

The protein belongs to the endoribonuclease YbeY family. Zn(2+) serves as cofactor.

It localises to the cytoplasm. Functionally, single strand-specific metallo-endoribonuclease involved in late-stage 70S ribosome quality control and in maturation of the 3' terminus of the 16S rRNA. The sequence is that of Endoribonuclease YbeY from Mannheimia succiniciproducens (strain KCTC 0769BP / MBEL55E).